A 932-amino-acid chain; its full sequence is Protocadherin gamma-A6 (932 aa).

An N-terminal signal peptide occupies residues 1–29 (MAPPQRHPQRSEQVLLLTLLGTLWGAAAA). 6 consecutive Cadherin domains span residues 30–133 (QIRY…TPRF), 134–242 (LKEE…TPVF), 243–347 (TQPV…VPEV), 348–452 (VVTS…PPTF), 453–562 (PHSS…APEI), and 570–682 (DGST…EPSA). Residues 30-692 (QIRYSIPEEL…KPNDSDLTLY (663 aa)) lie on the Extracellular side of the membrane. An N-linked (GlcNAc...) asparagine glycan is attached at asparagine 81. 2 N-linked (GlcNAc...) asparagine glycosylation sites follow: asparagine 419 and asparagine 545. Residue asparagine 685 is glycosylated (N-linked (GlcNAc...) asparagine). A helical membrane pass occupies residues 693–713 (LVVAVAAVSCVFLAFVIVLLA). Residues 714–932 (LRLQRWHKSR…KKKSGKKEKK (219 aa)) are Cytoplasmic-facing. 2 disordered regions span residues 803–841 (DPRQ…WPNN) and 902–932 (ATLT…KEKK). The segment covering 806–841 (QLQQAPPNTDWRFSQAQRPGTSGSQNGDDTGTWPNN) has biased composition (polar residues). Positions 922–932 (NKKKSGKKEKK) are enriched in basic residues.

The protein localises to the cell membrane. Potential calcium-dependent cell-adhesion protein. May be involved in the establishment and maintenance of specific neuronal connections in the brain. This is Protocadherin gamma-A6 (PCDHGA6) from Pan troglodytes (Chimpanzee).